Reading from the N-terminus, the 188-residue chain is Large ribosomal subunit protein eL18z (188 aa).

The protein belongs to the eukaryotic ribosomal protein eL18 family.

The polypeptide is Large ribosomal subunit protein eL18z (RPL18A) (Arabidopsis thaliana (Mouse-ear cress)).